The sequence spans 640 residues: Chaperone protein DnaK (640 aa).

At Thr199 the chain carries Phosphothreonine; by autocatalysis. The span at 606 to 621 (QQAAGAGAQQADGTGK) shows a compositional bias: low complexity. The segment at 606–640 (QQAAGAGAQQADGTGKAADDGVVDAEFEEVKEDNK) is disordered. Over residues 626–640 (GVVDAEFEEVKEDNK) the composition is skewed to acidic residues.

The protein belongs to the heat shock protein 70 family.

In terms of biological role, acts as a chaperone. The chain is Chaperone protein DnaK from Cellvibrio japonicus (strain Ueda107) (Pseudomonas fluorescens subsp. cellulosa).